Here is a 441-residue protein sequence, read N- to C-terminus: Lysine histidine transporter 2 (441 aa).

The Cytoplasmic segment spans residues 1–32 (MGNSEMSASEVAAAKQKNVDDWLPITSSRNAK). Residues 33-53 (WWYSAFHNVTAMVGAGVLSLP) form a helical membrane-spanning segment. The Extracellular portion of the chain corresponds to 54 to 58 (YAMSN). The chain crosses the membrane as a helical span at residues 59–79 (LGWGPGVTIMVMSWIITLYTL). Over 80-110 (WQMVEMHEIVPGKRLDRYHELGQHAFGEKLG) the chain is Cytoplasmic. The chain crosses the membrane as a helical span at residues 111–131 (LWIVVPQQLIVEVGVDIVYMV). Topologically, residues 132–152 (TGGASLKKVHQLVCPDCKEIR) are extracellular. A helical membrane pass occupies residues 153 to 173 (TTFWIMIFASVHFVISHLPNF). Topologically, residues 174–175 (NS) are cytoplasmic. A helical membrane pass occupies residues 176–196 (ISIISLAAAVMSLTYSTIAWA). Residues 197–222 (ASVHKGVHPDVDYSPRASTDVGKVFN) are Extracellular-facing. A helical transmembrane segment spans residues 223–243 (FLNALGDVAFAYAGHNVVLEI). Topologically, residues 244–263 (QATIPSTPEMPSKVPMWRGV) are cytoplasmic. A helical membrane pass occupies residues 264-284 (IVAYIVVAICYFPVAFLGYYI). The Extracellular portion of the chain corresponds to 285–300 (FGNSVDDNILITLEKP). A helical membrane pass occupies residues 301 to 321 (IWLIAMANMFVVIHVIGSYQI). Topologically, residues 322 to 347 (FAMPVFDMLETVLVKKMNFNPSFKLR) are cytoplasmic. Residues 348–370 (FITRSLYVAFTMIVAICVPFFGG) traverse the membrane as a helical segment. Residues 371–373 (LLG) are Extracellular-facing. The helical transmembrane segment at 374 to 396 (FFGGFAFAPTTYYLPCIMWLVLK) threads the bilayer. Residues 397–406 (KPKRFGLSWT) lie on the Cytoplasmic side of the membrane. The helical transmembrane segment at 407–427 (ANWFCIIVGVLLTILAPIGGL) threads the bilayer. The Extracellular segment spans residues 428–441 (RTIIINAKTYKFFS).

It belongs to the amino acid/polyamine transporter 2 family. Amino acid/auxin permease (AAAP) (TC 2.A.18.2) subfamily. In terms of tissue distribution, expressed in flower buds and to lower levels in leaves and stems. Not detected in roots and siliques. Restricted to the tapetum cell layer.

It localises to the cell membrane. Its activity is regulated as follows. Inhibited by diethylstibestrol (DES), 2,4-dinitrophenol (DNP) and carbonlycyanide m-chlorophenylhydrazone (CCCP). Amino acid-proton symporter. Transporter with a broad specificity for neutral and acidic amino acids. Basic amino acids are only marginally transported. Involved in import of amino acids into the tapetum cells for synthesis of compounds important for microspore structure. In Arabidopsis thaliana (Mouse-ear cress), this protein is Lysine histidine transporter 2 (LHT2).